The primary structure comprises 378 residues: Anhydro-N-acetylmuramic acid kinase (378 aa).

Position 23-30 (23-30 (GTSMDGAD)) interacts with ATP.

It belongs to the anhydro-N-acetylmuramic acid kinase family.

It catalyses the reaction 1,6-anhydro-N-acetyl-beta-muramate + ATP + H2O = N-acetyl-D-muramate 6-phosphate + ADP + H(+). The protein operates within amino-sugar metabolism; 1,6-anhydro-N-acetylmuramate degradation. Its pathway is cell wall biogenesis; peptidoglycan recycling. Catalyzes the specific phosphorylation of 1,6-anhydro-N-acetylmuramic acid (anhMurNAc) with the simultaneous cleavage of the 1,6-anhydro ring, generating MurNAc-6-P. Is required for the utilization of anhMurNAc either imported from the medium or derived from its own cell wall murein, and thus plays a role in cell wall recycling. This chain is Anhydro-N-acetylmuramic acid kinase, found in Bordetella bronchiseptica (strain ATCC BAA-588 / NCTC 13252 / RB50) (Alcaligenes bronchisepticus).